A 230-amino-acid polypeptide reads, in one-letter code: U2 small nuclear ribonucleoprotein A' (230 aa).

3 LRR repeats span residues 19 to 40 (KDRELDLRDNDISSLGNFPFFP), 41 to 62 (RLRMLLLARNRVRQIQPSLANS), and 65 to 86 (GLTTLVLTANNIAELADLDPLR). One can recognise an LRRCT domain in the interval 99-137 (NPVTRKEYYRLWIIWRIPSVRFLDYQKVKDAERAKAAEL). The segment at 211-230 (GRIPGGALDGAGNDGDQMQL) is disordered. A compositionally biased stretch (gly residues) spans 213–223 (IPGGALDGAGN).

Belongs to the U2 small nuclear ribonucleoprotein A family. In terms of assembly, associated with the spliceosome.

The protein resides in the nucleus. Its function is as follows. Involved in pre-mRNA splicing. In Emericella nidulans (strain FGSC A4 / ATCC 38163 / CBS 112.46 / NRRL 194 / M139) (Aspergillus nidulans), this protein is U2 small nuclear ribonucleoprotein A' (lea1).